The following is a 453-amino-acid chain: MGENDPPAAEAPFSFRSLFGLDDLKISPVAPDGDAVAAQILSLLPLKFFPIIVIGIIALILALAIGLGIHFDCSGKYRCHSSFKCIELTARCDGVSDCKNAEDEYRCVRVSGQRAALQVFTAAAWRTMCSDDWKSHYAKIACAQLGFPSYVSSDHLRVDALEEQFQGDFVSINHLLSDDKVTALHHSVYMREGCTSGHVVTLKCSACGTRTGYSPRIVGGNMSSLTQWPWQVSLQFQGYHLCGGSIITPLWIVTAAHCVYDLYHPKSWTVQVGLVSLMDSPVPSHLVEKIIYHSKYKPKRLGNDIALMKLSEPLTFDETIQPICLPNSEENFPDGKLCWTSGWGATEDGGDASPVLNHAAVPLISNKICNHRDVYGGIISPSMLCAGYLKGGVDSCQGDSGGPLVCQERRLWKLVGATSFGIGCAEVNKPGVYTRITSFLDWIHEQLERDLKT.

Topologically, residues 1–48 (MGENDPPAAEAPFSFRSLFGLDDLKISPVAPDGDAVAAQILSLLPLKF) are cytoplasmic. Residues 49-69 (FPIIVIGIIALILALAIGLGI) form a helical; Signal-anchor for type II membrane protein membrane-spanning segment. The Extracellular portion of the chain corresponds to 70–453 (HFDCSGKYRC…HEQLERDLKT (384 aa)). An LDL-receptor class A domain is found at 72-108 (DCSGKYRCHSSFKCIELTARCDGVSDCKNAEDEYRCV). Disulfide bonds link C73-C85, C79-C98, C92-C107, C129-C194, C142-C204, C207-C324, C242-C258, C338-C406, C369-C385, and C396-C424. Positions 104–205 (EYRCVRVSGQ…SGHVVTLKCS (102 aa)) constitute an SRCR domain. Positions 217-448 (IVGGNMSSLT…FLDWIHEQLE (232 aa)) constitute a Peptidase S1 domain. The N-linked (GlcNAc...) asparagine glycan is linked to N221. Catalysis depends on charge relay system residues H257 and D304. S400 serves as the catalytic Charge relay system.

It belongs to the peptidase S1 family. Post-translationally, undergoes autoproteolytic activation. Strongly expressed in liver, cochlea, brain, cerebellum, spleen, lung, and muscle and at a lower degree in retina, kidney, and heart. Expressed in the spiral ganglion, the cells supporting the organ of Corti and the stria vascularis. Isoform 2 is strongly expressed only in the cochlea with very faint expression in the cerebellum, spleen and muscle.

Its subcellular location is the endoplasmic reticulum membrane. In terms of biological role, probable serine protease that plays a role in hearing. Acts as a permissive factor for cochlear hair cell survival and activation at the onset of hearing and is required for saccular hair cell survival. Activates ENaC (in vitro). The polypeptide is Transmembrane protease serine 3 (Tmprss3) (Mus musculus (Mouse)).